We begin with the raw amino-acid sequence, 369 residues long: Probable dual-specificity RNA methyltransferase RlmN (369 aa).

The Proton acceptor role is filled by Glu98. One can recognise a Radical SAM core domain in the interval 106–341 (STSRNTLCIS…VTVRKSRGAD (236 aa)). The cysteines at positions 113 and 346 are disulfide-linked. Residues Cys120, Cys124, and Cys127 each contribute to the [4Fe-4S] cluster site. Residues 171 to 172 (GE), Ser204, 227 to 229 (SLH), and Asn303 each bind S-adenosyl-L-methionine. Cys346 acts as the S-methylcysteine intermediate in catalysis.

Belongs to the radical SAM superfamily. RlmN family. The cofactor is [4Fe-4S] cluster.

It localises to the cytoplasm. It catalyses the reaction adenosine(2503) in 23S rRNA + 2 reduced [2Fe-2S]-[ferredoxin] + 2 S-adenosyl-L-methionine = 2-methyladenosine(2503) in 23S rRNA + 5'-deoxyadenosine + L-methionine + 2 oxidized [2Fe-2S]-[ferredoxin] + S-adenosyl-L-homocysteine. The catalysed reaction is adenosine(37) in tRNA + 2 reduced [2Fe-2S]-[ferredoxin] + 2 S-adenosyl-L-methionine = 2-methyladenosine(37) in tRNA + 5'-deoxyadenosine + L-methionine + 2 oxidized [2Fe-2S]-[ferredoxin] + S-adenosyl-L-homocysteine. Its function is as follows. Specifically methylates position 2 of adenine 2503 in 23S rRNA and position 2 of adenine 37 in tRNAs. This chain is Probable dual-specificity RNA methyltransferase RlmN, found in Chloroherpeton thalassium (strain ATCC 35110 / GB-78).